Reading from the N-terminus, the 289-residue chain is Ketose 3-epimerase (289 aa).

E146 acts as the Proton donor/acceptor in catalysis. Residue E146 participates in Mn(2+) binding. Substrate-binding positions include E152 and 179–182 (DTYH). Residues D179 and H205 each contribute to the Mn(2+) site. R211 contributes to the substrate binding site. The active-site Proton donor/acceptor is the E240. E240 provides a ligand contact to Mn(2+).

It belongs to the hyi family. As to quaternary structure, homotetramer. Requires Mg(2+) as cofactor. The cofactor is Mn(2+). It depends on Co(2+) as a cofactor.

The enzyme catalyses L-ribulose = L-xylulose. It catalyses the reaction D-allulose = keto-D-fructose. It carries out the reaction keto-L-tagatose = keto-L-sorbose. The catalysed reaction is D-ribulose = D-xylulose. The enzyme catalyses L-allulose = keto-L-fructose. It catalyses the reaction keto-D-tagatose = keto-D-sorbose. Catalyzes the reversible C-3 epimerization of several ketoses. Shows the highest enzymatic activity for the epimerization of L-ribulose to L-xylulose. Is also able to convert D-allulose (also known as D-psicose) to D-fructose and, to a lesser extent, L-tagatose to L-sorbose, D-ribulose to D-xylulose, L-allulose to L-fructose and D-tagatose to D-sorbose. The protein is Ketose 3-epimerase of Arthrobacter globiformis.